A 422-amino-acid polypeptide reads, in one-letter code: FAD-dependent monooxygenase ptmM (422 aa).

Residues 8-24 (VIIVGGSIAGLTLAHCL) traverse the membrane as a helical segment. Residues Glu-35, Gly-49, Arg-108, Asp-308, and Ala-321 each contribute to the FAD site.

The protein belongs to the paxM FAD-dependent monooxygenase family. The cofactor is FAD.

The protein resides in the membrane. The protein operates within secondary metabolite biosynthesis. FAD-dependent monooxygenase; part of the gene cluster that mediates the biosynthesis of the indole diterpenes penitrems. The geranylgeranyl diphosphate (GGPP) synthase ptmG catalyzes the first step in penitrem biosynthesis via conversion of farnesyl pyrophosphate and isopentyl pyrophosphate into geranylgeranyl pyrophosphate (GGPP). Condensation of indole-3-glycerol phosphate with GGPP by the prenyl transferase ptmC then forms 3-geranylgeranylindole (3-GGI). Epoxidation by the FAD-dependent monooxygenase ptmM leads to a epoxidized-GGI that is substrate of the terpene cyclase ptmB for cyclization to yield paspaline. Paspaline is subsequently converted to 13-desoxypaxilline by the cytochrome P450 monooxygenase ptmP, the latter being then converted to paxilline by the cytochrome P450 monooxygenase ptmQ. Paxilline is converted to beta-paxitriol via C-10 ketoreduction by the short-chain dehydrogenase ptmH which can be monoprenylated at the C-20 by the indole diterpene prenyltransferase ptmD. A two-step elimination (acetylation and elimination) process performed by the O-acetyltransferase ptmV and ptmI leads to the production of the prenylated form of penijanthine. The FAD-linked oxidoreductase ptmO then converts the prenylated form of penijanthine into PC-M5 which is in turn transformed into PC-M4 by the aromatic dimethylallyltransferase ptmE. Five sequential oxidative transformations performed by the cytochrome P450 monooxygenases ptmK, ptmU, ptmL, ptmN and ptmJ yield the various penitrem compounds. PtmK, ptmU and ptmM are involved in the formation of the key bicyclic ring of penitrem C via the formation of the intermediates secopenitrem D and penitrem D. PtmL catalyzes the epoxidation of penitrem D and C to yield penitrem B and F, respectively. PtmJ catalyzes the last benzylic hydroxylation to convert penitrem B to prenitrem E and penitrem F to penitrem A. The polypeptide is FAD-dependent monooxygenase ptmM (Penicillium ochrochloron).